The following is a 545-amino-acid chain: CTP synthase (545 aa).

The segment at 1–266 (MTTRYIFVTG…DDLVVKRFGL (266 aa)) is amidoligase domain. Ser-14 is a binding site for CTP. Ser-14 is a binding site for UTP. ATP-binding positions include 15 to 20 (SLGKGI) and Asp-72. The Mg(2+) site is built by Asp-72 and Glu-140. Residues 147–149 (DIE), 187–192 (KTKPTQ), and Lys-223 each bind CTP. Residues 187–192 (KTKPTQ) and Lys-223 contribute to the UTP site. 239-241 (KDV) provides a ligand contact to ATP. The region spanning 291 to 542 (VIGMVGKYIE…IAAASAHQKR (252 aa)) is the Glutamine amidotransferase type-1 domain. Gly-352 is an L-glutamine binding site. Cys-379 functions as the Nucleophile; for glutamine hydrolysis in the catalytic mechanism. L-glutamine is bound by residues 380–383 (LGMQ), Glu-403, and Arg-470. Active-site residues include His-515 and Glu-517.

Belongs to the CTP synthase family. In terms of assembly, homotetramer.

The catalysed reaction is UTP + L-glutamine + ATP + H2O = CTP + L-glutamate + ADP + phosphate + 2 H(+). It carries out the reaction L-glutamine + H2O = L-glutamate + NH4(+). The enzyme catalyses UTP + NH4(+) + ATP = CTP + ADP + phosphate + 2 H(+). It participates in pyrimidine metabolism; CTP biosynthesis via de novo pathway; CTP from UDP: step 2/2. Its activity is regulated as follows. Allosterically activated by GTP, when glutamine is the substrate; GTP has no effect on the reaction when ammonia is the substrate. The allosteric effector GTP functions by stabilizing the protein conformation that binds the tetrahedral intermediate(s) formed during glutamine hydrolysis. Inhibited by the product CTP, via allosteric rather than competitive inhibition. Its function is as follows. Catalyzes the ATP-dependent amination of UTP to CTP with either L-glutamine or ammonia as the source of nitrogen. Regulates intracellular CTP levels through interactions with the four ribonucleotide triphosphates. The protein is CTP synthase of Shewanella baltica (strain OS223).